Consider the following 355-residue polypeptide: UDP-N-acetylglucosamine--N-acetylmuramyl-(pentapeptide) pyrophosphoryl-undecaprenol N-acetylglucosamine transferase (355 aa).

UDP-N-acetyl-alpha-D-glucosamine contacts are provided by residues 15 to 17 (TGG), asparagine 127, arginine 163, serine 191, isoleucine 244, 263 to 268 (ALTVSE), and glutamine 288.

Belongs to the glycosyltransferase 28 family. MurG subfamily.

Its subcellular location is the cell inner membrane. It carries out the reaction di-trans,octa-cis-undecaprenyl diphospho-N-acetyl-alpha-D-muramoyl-L-alanyl-D-glutamyl-meso-2,6-diaminopimeloyl-D-alanyl-D-alanine + UDP-N-acetyl-alpha-D-glucosamine = di-trans,octa-cis-undecaprenyl diphospho-[N-acetyl-alpha-D-glucosaminyl-(1-&gt;4)]-N-acetyl-alpha-D-muramoyl-L-alanyl-D-glutamyl-meso-2,6-diaminopimeloyl-D-alanyl-D-alanine + UDP + H(+). The protein operates within cell wall biogenesis; peptidoglycan biosynthesis. Its function is as follows. Cell wall formation. Catalyzes the transfer of a GlcNAc subunit on undecaprenyl-pyrophosphoryl-MurNAc-pentapeptide (lipid intermediate I) to form undecaprenyl-pyrophosphoryl-MurNAc-(pentapeptide)GlcNAc (lipid intermediate II). The protein is UDP-N-acetylglucosamine--N-acetylmuramyl-(pentapeptide) pyrophosphoryl-undecaprenol N-acetylglucosamine transferase of Cronobacter sakazakii (strain ATCC BAA-894) (Enterobacter sakazakii).